The chain runs to 95 residues: Large ribosomal subunit protein uL23 (95 aa).

The protein belongs to the universal ribosomal protein uL23 family. As to quaternary structure, part of the 50S ribosomal subunit. Contacts protein L29, and trigger factor when it is bound to the ribosome.

In terms of biological role, one of the early assembly proteins it binds 23S rRNA. One of the proteins that surrounds the polypeptide exit tunnel on the outside of the ribosome. Forms the main docking site for trigger factor binding to the ribosome. The sequence is that of Large ribosomal subunit protein uL23 from Bacillus pumilus (strain SAFR-032).